We begin with the raw amino-acid sequence, 294 residues long: ATP synthase gamma chain (294 aa).

This sequence belongs to the ATPase gamma chain family. F-type ATPases have 2 components, CF(1) - the catalytic core - and CF(0) - the membrane proton channel. CF(1) has five subunits: alpha(3), beta(3), gamma(1), delta(1), epsilon(1). CF(0) has three main subunits: a, b and c.

The protein resides in the cell inner membrane. Produces ATP from ADP in the presence of a proton gradient across the membrane. The gamma chain is believed to be important in regulating ATPase activity and the flow of protons through the CF(0) complex. The polypeptide is ATP synthase gamma chain (Rhizobium leguminosarum bv. trifolii (strain WSM2304)).